Reading from the N-terminus, the 24-residue chain is Bombinin (24 aa).

N24 carries the asparagine amide modification.

Belongs to the bombinin family. As to expression, expressed by the skin glands.

The protein resides in the secreted. Its function is as follows. Has antimicrobial and hemolytic activities. This is Bombinin from Bombina variegata (Yellow-bellied toad).